Consider the following 521-residue polypeptide: MASTRPSSTATKTKAPDDLVAPVVKKPHIYYGSLEEKERERLAKGESGLLGKEGLKAGIEAGNINITSGEVFEIEEHISERQAEVLAEFERRKRARQINVSTDDSEVKACLRALGEPITLFGEGPAERRERLRNILSVVGTDALKKTKKDDEKSKKSKEEYQQTWYHEGPHSLKVARLWIANYSLPRAMKRLEEARLHKEIPETTRTSQMQELHKSLRSLNNFCSQIGDDRPISYCHFSPNSKMLATACWSGLCKLWSVPDCNLLHTLRGHNTNVGAIVFHPKSTVSLDQKDVNLASCAADGSVKLWSLDSDEPVADIEGHTVRVARVTWHPSGRFLGTTCYDRSWRLWDLEAQEEILHQEGHSMGVYDIAFHQDGSLAGTGGLDAFGRVWDLRTGRCIMFLEGHLKEIYGINFSPNGYHIATGSGDNTCKVWDLRQRRCVYTIPAHQNLVTGVKFEPIHGNFLLTGAYDNTAKIWTHPGWSPLKTLAGHEGKVMGLDISSDGQLIATCSYDRTFKLWMAE.

At Lys26 the chain carries N6-acetyllysine. WD repeat units follow at residues 229 to 268 (DDRP…LHTL), 271 to 318 (HNTN…VADI), 321 to 360 (HTVR…ILHQ), 363 to 402 (HSMG…IMFL), 405 to 444 (HLKE…VYTI), 447 to 487 (HQNL…LKTL), and 490 to 521 (HEGK…WMAE).

Component of the precatalytic spliceosome (spliceosome B complex). Component of the U4/U6-U5 tri-snRNP complex, a building block of the precatalytic spliceosome (spliceosome B complex). The U4/U6-U5 tri-snRNP complex is composed of the U4, U6 and U5 snRNAs and at least PRPF3, PRPF4, PRPF6, PRPF8, PRPF31, SNRNP200, TXNL4A, SNRNP40, SNRPB, SNRPD1, SNRPD2, SNRPD3, SNRPE, SNRPF, SNRPG, DDX23, CD2BP2, PPIH, SNU13, EFTUD2, SART1 and USP39, plus LSM2, LSM3, LSM4, LSM5, LSM6, LSM7 and LSM8. Interacts directly with PRPF18, PPIH and PRPF3. Part of a heteromeric complex containing PPIH, PRPF3 and PRPF4 that is stable in the absence of RNA. Interacts with ERCC6.

Its subcellular location is the nucleus. It localises to the nucleus speckle. Its function is as follows. Plays a role in pre-mRNA splicing as component of the U4/U6-U5 tri-snRNP complex that is involved in spliceosome assembly, and as component of the precatalytic spliceosome (spliceosome B complex). In Bos taurus (Bovine), this protein is U4/U6 small nuclear ribonucleoprotein Prp4 (PRPF4).